A 369-amino-acid chain; its full sequence is tRNA/tmRNA (uracil-C(5))-methyltransferase (369 aa).

S-adenosyl-L-methionine-binding residues include Gln-193, Tyr-221, Asn-226, Glu-242, and Asp-302. Cys-327 serves as the catalytic Nucleophile. The active-site Proton acceptor is Glu-361.

The protein belongs to the class I-like SAM-binding methyltransferase superfamily. RNA M5U methyltransferase family. TrmA subfamily.

The catalysed reaction is uridine(54) in tRNA + S-adenosyl-L-methionine = 5-methyluridine(54) in tRNA + S-adenosyl-L-homocysteine + H(+). The enzyme catalyses uridine(341) in tmRNA + S-adenosyl-L-methionine = 5-methyluridine(341) in tmRNA + S-adenosyl-L-homocysteine + H(+). In terms of biological role, dual-specificity methyltransferase that catalyzes the formation of 5-methyluridine at position 54 (m5U54) in all tRNAs, and that of position 341 (m5U341) in tmRNA (transfer-mRNA). The sequence is that of tRNA/tmRNA (uracil-C(5))-methyltransferase from Actinobacillus succinogenes (strain ATCC 55618 / DSM 22257 / CCUG 43843 / 130Z).